The chain runs to 210 residues: Probable GTP-binding protein EngB (210 aa).

An EngB-type G domain is found at threonine 25–glutamate 199. GTP contacts are provided by residues glycine 33–serine 40, glycine 60–leucine 64, aspartate 78–glycine 81, threonine 145–aspartate 148, and phenylalanine 178–serine 180. The Mg(2+) site is built by serine 40 and threonine 62.

Belongs to the TRAFAC class TrmE-Era-EngA-EngB-Septin-like GTPase superfamily. EngB GTPase family. It depends on Mg(2+) as a cofactor.

Necessary for normal cell division and for the maintenance of normal septation. This chain is Probable GTP-binding protein EngB, found in Klebsiella pneumoniae subsp. pneumoniae (strain ATCC 700721 / MGH 78578).